The following is a 164-amino-acid chain: Replication restart protein DnaT (164 aa).

It belongs to the DnaT family. As to quaternary structure, homooligomerizes. Interacts with PriB. Component of the replication restart primosome. Primosome assembly occurs via a 'hand-off' mechanism. PriA binds to replication forks, subsequently PriB then DnaT bind; DnaT then displaces ssDNA to generate the helicase loading substrate.

In terms of biological role, involved in the restart of stalled replication forks, which reloads the replicative helicase on sites other than the origin of replication. Can function in multiple replication restart pathways. Displaces ssDNA from a PriB-ssDNA complex. Probably forms a spiral filament on ssDNA. The chain is Replication restart protein DnaT from Buchnera aphidicola subsp. Acyrthosiphon pisum (strain 5A).